Here is a 361-residue protein sequence, read N- to C-terminus: Phospho-N-acetylmuramoyl-pentapeptide-transferase (361 aa).

Helical transmembrane passes span 28–48, 74–94, 99–119, 135–155, 167–187, 203–223, 236–256, 263–283, 288–308, and 338–358; these read LAVL…IKFL, TMGG…LADL, IWIT…DDYA, LLLQ…TIDS, SLSM…IVGA, VPIA…GNLI, TGEL…FLWF, VFMG…ISVI, IVLG…IMQV, and KVVI…LSSL.

This sequence belongs to the glycosyltransferase 4 family. MraY subfamily. It depends on Mg(2+) as a cofactor.

Its subcellular location is the cell inner membrane. The catalysed reaction is UDP-N-acetyl-alpha-D-muramoyl-L-alanyl-gamma-D-glutamyl-meso-2,6-diaminopimeloyl-D-alanyl-D-alanine + di-trans,octa-cis-undecaprenyl phosphate = di-trans,octa-cis-undecaprenyl diphospho-N-acetyl-alpha-D-muramoyl-L-alanyl-D-glutamyl-meso-2,6-diaminopimeloyl-D-alanyl-D-alanine + UMP. Its pathway is cell wall biogenesis; peptidoglycan biosynthesis. In terms of biological role, catalyzes the initial step of the lipid cycle reactions in the biosynthesis of the cell wall peptidoglycan: transfers peptidoglycan precursor phospho-MurNAc-pentapeptide from UDP-MurNAc-pentapeptide onto the lipid carrier undecaprenyl phosphate, yielding undecaprenyl-pyrophosphoryl-MurNAc-pentapeptide, known as lipid I. The polypeptide is Phospho-N-acetylmuramoyl-pentapeptide-transferase (Rickettsia bellii (strain OSU 85-389)).